We begin with the raw amino-acid sequence, 498 residues long: Glycerol kinase (498 aa).

Threonine 14 provides a ligand contact to ADP. 3 residues coordinate ATP: threonine 14, threonine 15, and serine 16. Threonine 14 is a binding site for sn-glycerol 3-phosphate. Arginine 18 contacts ADP. Sn-glycerol 3-phosphate contacts are provided by arginine 84, glutamate 85, and tyrosine 136. Glycerol is bound by residues arginine 84, glutamate 85, and tyrosine 136. Residue histidine 232 is modified to Phosphohistidine; by HPr. Sn-glycerol 3-phosphate is bound at residue aspartate 246. Aspartate 246 and glutamine 247 together coordinate glycerol. Threonine 268 and glycine 311 together coordinate ADP. Positions 268, 311, 315, and 412 each coordinate ATP. The ADP site is built by glycine 412 and asparagine 416.

This sequence belongs to the FGGY kinase family. In terms of assembly, homotetramer and homodimer (in equilibrium). In terms of processing, the phosphoenolpyruvate-dependent sugar phosphotransferase system (PTS), including enzyme I, and histidine-containing protein (HPr) are required for the phosphorylation, which leads to the activation of the enzyme.

It carries out the reaction glycerol + ATP = sn-glycerol 3-phosphate + ADP + H(+). It participates in polyol metabolism; glycerol degradation via glycerol kinase pathway; sn-glycerol 3-phosphate from glycerol: step 1/1. Activated by phosphorylation and inhibited by fructose 1,6-bisphosphate (FBP). In terms of biological role, key enzyme in the regulation of glycerol uptake and metabolism. Catalyzes the phosphorylation of glycerol to yield sn-glycerol 3-phosphate. The protein is Glycerol kinase of Lactococcus lactis subsp. lactis (strain IL1403) (Streptococcus lactis).